The following is a 108-amino-acid chain: MITEKIDNISVTTKANVYFDGKCVSHGITFTDGTKKSVGVILPATLTFNTGAPEIMECVAGACEYRLAGSDSWVKSAAGEKFSVPGNAKFDIRVAEGFEAYHYICHFG.

It belongs to the nucleoside phosphorylase PpnP family.

The catalysed reaction is a purine D-ribonucleoside + phosphate = a purine nucleobase + alpha-D-ribose 1-phosphate. It carries out the reaction adenosine + phosphate = alpha-D-ribose 1-phosphate + adenine. It catalyses the reaction cytidine + phosphate = cytosine + alpha-D-ribose 1-phosphate. The enzyme catalyses guanosine + phosphate = alpha-D-ribose 1-phosphate + guanine. The catalysed reaction is inosine + phosphate = alpha-D-ribose 1-phosphate + hypoxanthine. It carries out the reaction thymidine + phosphate = 2-deoxy-alpha-D-ribose 1-phosphate + thymine. It catalyses the reaction uridine + phosphate = alpha-D-ribose 1-phosphate + uracil. The enzyme catalyses xanthosine + phosphate = alpha-D-ribose 1-phosphate + xanthine. Catalyzes the phosphorolysis of diverse nucleosides, yielding D-ribose 1-phosphate and the respective free bases. Can use uridine, adenosine, guanosine, cytidine, thymidine, inosine and xanthosine as substrates. Also catalyzes the reverse reactions. In Polaromonas sp. (strain JS666 / ATCC BAA-500), this protein is Pyrimidine/purine nucleoside phosphorylase.